The sequence spans 418 residues: Serine/threonine transporter SstT (418 aa).

Transmembrane regions (helical) follow at residues 21 to 41 (ILIG…AAIA), 49 to 69 (FVGA…IASI), 83 to 103 (ILFL…VVSF), 142 to 162 (ALLN…GIAL), 190 to 210 (FAPL…GFGA), 217 to 237 (LLVV…PLIV), 299 to 319 (MAGA…TLGI), and 331 to 351 (VVAA…LLLI).

The protein belongs to the dicarboxylate/amino acid:cation symporter (DAACS) (TC 2.A.23) family.

It is found in the cell inner membrane. The catalysed reaction is L-serine(in) + Na(+)(in) = L-serine(out) + Na(+)(out). It catalyses the reaction L-threonine(in) + Na(+)(in) = L-threonine(out) + Na(+)(out). Functionally, involved in the import of serine and threonine into the cell, with the concomitant import of sodium (symport system). The polypeptide is Serine/threonine transporter SstT (Yersinia pseudotuberculosis serotype O:1b (strain IP 31758)).